We begin with the raw amino-acid sequence, 246 residues long: Chaperone protein SefB (246 aa).

The N-terminal stretch at 1–24 (MYILNKFIRRTVIFFFFCYLPIAS) is a signal peptide. A disulfide bridge connects residues Cys-124 and Cys-155.

Belongs to the periplasmic pilus chaperone family.

The protein localises to the periplasm. Functionally, required for the biogenesis of the SefA (SEF14) fimbria. The sequence is that of Chaperone protein SefB (sefB) from Salmonella enteritidis.